Here is a 319-residue protein sequence, read N- to C-terminus: ATP-dependent 6-phosphofructokinase (319 aa).

G11 contacts ATP. ADP is bound at residue 21-25 (RAVVR). Residues 72 to 73 (RC) and 102 to 105 (GNGS) each bind ATP. Residue N103 participates in Mg(2+) binding. 125–127 (TID) provides a ligand contact to substrate. D127 functions as the Proton acceptor in the catalytic mechanism. R154 contributes to the ADP binding site. Residues R162 and 169–171 (MGR) each bind substrate. Residues 185–187 (GAE), R211, and 213–215 (KMH) contribute to the ADP site. Substrate is bound by residues E222, R243, and 249–252 (HIQR).

Belongs to the phosphofructokinase type A (PFKA) family. ATP-dependent PFK group I subfamily. Prokaryotic clade 'B1' sub-subfamily. In terms of assembly, homotetramer. It depends on Mg(2+) as a cofactor.

The protein resides in the cytoplasm. The catalysed reaction is beta-D-fructose 6-phosphate + ATP = beta-D-fructose 1,6-bisphosphate + ADP + H(+). It participates in carbohydrate degradation; glycolysis; D-glyceraldehyde 3-phosphate and glycerone phosphate from D-glucose: step 3/4. Its activity is regulated as follows. Allosterically activated by ADP and other diphosphonucleosides, and allosterically inhibited by phosphoenolpyruvate. In terms of biological role, catalyzes the phosphorylation of D-fructose 6-phosphate to fructose 1,6-bisphosphate by ATP, the first committing step of glycolysis. This chain is ATP-dependent 6-phosphofructokinase, found in Clostridium acetobutylicum (strain ATCC 824 / DSM 792 / JCM 1419 / IAM 19013 / LMG 5710 / NBRC 13948 / NRRL B-527 / VKM B-1787 / 2291 / W).